The chain runs to 206 residues: Thymidylate kinase (206 aa).

11–18 (GIDGAGKT) is a binding site for ATP.

It belongs to the thymidylate kinase family.

It catalyses the reaction dTMP + ATP = dTDP + ADP. Phosphorylation of dTMP to form dTDP in both de novo and salvage pathways of dTTP synthesis. The sequence is that of Thymidylate kinase from Paraburkholderia phytofirmans (strain DSM 17436 / LMG 22146 / PsJN) (Burkholderia phytofirmans).